The primary structure comprises 190 residues: Recombination protein RecR (190 aa).

The segment at 58–73 (CEQCGALSENELCEIC) adopts a C4-type zinc-finger fold. A Toprim domain is found at 81-167 (NILCIVESPK…TFSKIAQGIP (87 aa)).

It belongs to the RecR family.

In terms of biological role, may play a role in DNA repair. It seems to be involved in an RecBC-independent recombinational process of DNA repair. It may act with RecF and RecO. In Campylobacter jejuni subsp. jejuni serotype O:23/36 (strain 81-176), this protein is Recombination protein RecR.